A 365-amino-acid chain; its full sequence is Spermidine-binding periplasmic protein SpuE (365 aa).

Positions 1 to 24 are cleaved as a signal peptide; it reads MQHSIGKTLLVAALATAIAGPVQA. Spermidine contacts are provided by Thr35, Glu181, Asp242, and Asn269.

This sequence belongs to the bacterial solute-binding protein PotD/PotF family.

It localises to the periplasm. Functionally, spermidine-binding protein probably required for its uptake into cells. Binds spermidine with high affinity (KD=14.3 nM). Does not bind putrescine, cadaverine or spermine. Spermidine binding induces large inter-domain conformational changes. Implicated in induction of type 3 secretion systems (T3SS), which play a role in virulence. The chain is Spermidine-binding periplasmic protein SpuE (spuE) from Pseudomonas aeruginosa (strain ATCC 15692 / DSM 22644 / CIP 104116 / JCM 14847 / LMG 12228 / 1C / PRS 101 / PAO1).